The chain runs to 419 residues: Double-stranded RNA-binding protein 1 (419 aa).

2 DRBM domains span residues 15–84 and 101–170; these read VFKS…ELAK and LCKN…AIQS. Positions 207 to 222 match the Bipartite nuclear localization motif; sequence KARKAQFKKKAQKGKR. Tandem repeats lie at residues 247–274, 275–302, 303–330, 331–358, 359–386, and 387–414. Positions 247 to 414 are 6 X 28 AA repeats of E-K-I-E-T-T-P-N-L-E-[PS]-[PS]-S-C-M-[NS]-G-L-K-E-A-A-F-G-S-V-E-T; it reads EKIETTPNLE…KEAAFGSVET (168 aa).

Homodimer. Heterodimer with DRB2, DRB4 or DRB5. Interacts with SE and DCL1. Interacts with RCF3, RS40 and RS41. Expressed in rosette and cauline leaves, stems, roots, flowers and siliques.

Its subcellular location is the nucleus. The protein resides in the nucleus speckle. Its function is as follows. Double-stranded RNA-binding protein involved in RNA-mediated post-transcriptional gene silencing (PTGS). Functions in the microRNAs (miRNAs) biogenesis by assisting DICER-LIKE 1 (DCL1) in the accurate processing from primary miRNAs (pri-miRNAs) to miRNAs in the nucleus. Forms a complex with SERRATE (SE) and DCL1 to promote accurate processing of pri-miRNAs by DCL1. Binds and assist DCL1 for accurate processing of precursor miRNAs (pre-miRNA). Indirectly involved in the production of trans-acting small interfering RNAs (ta-siRNAs) derived from the TAS1, TAS2 or TAS3 endogenous transcripts by participating in the production of their initiating miRNAs. Involved with argonaute 1 (AGO1) in the guide strand selection from miRNA duplexes, presumably by directional loading of the miRNA duplex (guide stand and passenger strand) onto the RNA-induced silencing complex (RISC) for passenger strand degradation. Does not participate in sense transgene-induced post-transcriptional gene silencing (S-PTGS). Involved in several plant development aspects and response to hormones through its role in miRNAs processing. In Arabidopsis thaliana (Mouse-ear cress), this protein is Double-stranded RNA-binding protein 1 (DRB1).